A 483-amino-acid polypeptide reads, in one-letter code: V-type proton ATPase subunit H (483 aa).

S483 is subject to Phosphoserine.

It belongs to the V-ATPase H subunit family. V-ATPase is a heteromultimeric enzyme made up of two complexes: the ATP-hydrolytic V1 complex and the proton translocation V0 complex. The V1 complex consists of three catalytic AB heterodimers that form a heterohexamer, three peripheral stalks each consisting of EG heterodimers, one central rotor including subunits D and F, and the regulatory subunits C and H. The proton translocation complex V0 consists of the proton transport subunit a, a ring of proteolipid subunits c9c'', rotary subunit d, subunits e and f, and the accessory subunits ATP6AP1/Ac45 and ATP6AP2/PRR. Interacts with AP2M1. Interacts with TM9SF4 in colon cancer cells. In terms of assembly, (Microbial infection) Interacts with HIV-1 Nef protein. As to quaternary structure, (Microbial infection) Interacts with M.tuberculosis PtpA, which blocks V-ATPase trafficking and phagosome acidification. As to expression, widely expressed.

The protein resides in the cytoplasmic vesicle. The protein localises to the clathrin-coated vesicle membrane. Subunit of the V1 complex of vacuolar(H+)-ATPase (V-ATPase), a multisubunit enzyme composed of a peripheral complex (V1) that hydrolyzes ATP and a membrane integral complex (V0) that translocates protons. V-ATPase is responsible for acidifying and maintaining the pH of intracellular compartments and in some cell types, is targeted to the plasma membrane, where it is responsible for acidifying the extracellular environment. Subunit H is essential for V-ATPase activity, but not for the assembly of the complex. Involved in the endocytosis mediated by clathrin-coated pits, required for the formation of endosomes. The sequence is that of V-type proton ATPase subunit H (ATP6V1H) from Homo sapiens (Human).